A 571-amino-acid chain; its full sequence is Phosphatidylinositol-3,5-bisphosphate 3-phosphatase MTMR2 (571 aa).

The region spanning 1–67 (MEEPPLLPGE…GVINRVEKIG (67 aa)) is the GRAM domain. A Myotubularin phosphatase domain is found at 133–508 (GWKVYDPIWE…RHLELWVGYY (376 aa)). Residues N258, N283, and I284 each contribute to the a 1,2-diacyl-sn-glycero-3-phospho-(1D-myo-inositol-3,5-bisphosphate) site. A 1,2-diacyl-sn-glycero-3-phospho-(1D-myo-inositol-3-phosphate) contacts are provided by N258, N283, and I284. Residue C345 is the Phosphocysteine intermediate of the active site. The a 1,2-diacyl-sn-glycero-3-phospho-(1D-myo-inositol-3,5-bisphosphate) site is built by S346, D347, G348, W349, D350, R351, R387, and R391. A 1,2-diacyl-sn-glycero-3-phospho-(1D-myo-inositol-3-phosphate) contacts are provided by S346, D347, G348, W349, D350, and R351. An a 1,2-diacyl-sn-glycero-3-phospho-(1D-myo-inositol-3-phosphate)-binding site is contributed by R391. The stretch at 521–553 (VHNRYKELLAKRAELQKKVEELQREITNRSTSS) forms a coiled coil. The interval 544-571 (REITNRSTSSSERAGSPAQCVTPVQTVV) is disordered.

Belongs to the protein-tyrosine phosphatase family. Non-receptor class myotubularin subfamily. As to quaternary structure, homooligomer and heterooligomer.

It is found in the cytoplasm. The protein localises to the early endosome membrane. The enzyme catalyses a 1,2-diacyl-sn-glycero-3-phospho-(1D-myo-inositol-3,5-bisphosphate) + H2O = a 1,2-diacyl-sn-glycero-3-phospho-(1D-myo-inositol-5-phosphate) + phosphate. It catalyses the reaction a 1,2-diacyl-sn-glycero-3-phospho-(1D-myo-inositol-3-phosphate) + H2O = a 1,2-diacyl-sn-glycero-3-phospho-(1D-myo-inositol) + phosphate. It carries out the reaction 1,2-dioctanoyl-sn-glycero-3-phospho-(1-D-myo-inositol-3-phosphate) + H2O = 1,2-dioctanoyl-sn-glycero-3-phospho-(1D-myo-inositol) + phosphate. The catalysed reaction is 1,2-dioctanoyl-sn-glycero-3-phospho-(1D-myo-inositol-3,5-bisphosphate) + H2O = 1,2-dioctanoyl-sn-glycero-3-phospho-(1D-myo-inositol-5-phosphate) + phosphate. Its function is as follows. Lipid phosphatase that specifically dephosphorylates the D-3 position of phosphatidylinositol 3-phosphate and phosphatidylinositol 3,5-bisphosphate, generating phosphatidylinositol and phosphatidylinositol 5-phosphate. Regulates the level of these phosphoinositides critical for various biological processes including autophagy initiation and autophagosome maturation. The chain is Phosphatidylinositol-3,5-bisphosphate 3-phosphatase MTMR2 from Gallus gallus (Chicken).